The following is a 195-amino-acid chain: Imidazoleglycerol-phosphate dehydratase (195 aa).

Belongs to the imidazoleglycerol-phosphate dehydratase family.

Its subcellular location is the cytoplasm. The enzyme catalyses D-erythro-1-(imidazol-4-yl)glycerol 3-phosphate = 3-(imidazol-4-yl)-2-oxopropyl phosphate + H2O. It participates in amino-acid biosynthesis; L-histidine biosynthesis; L-histidine from 5-phospho-alpha-D-ribose 1-diphosphate: step 6/9. This is Imidazoleglycerol-phosphate dehydratase from Paraburkholderia phymatum (strain DSM 17167 / CIP 108236 / LMG 21445 / STM815) (Burkholderia phymatum).